The following is a 321-amino-acid chain: ATP-dependent 6-phosphofructokinase (321 aa).

Residue Gly-12 coordinates ATP. Residues Arg-22–Arg-26 and Arg-55–Asp-60 contribute to the ADP site. Residues Arg-73–Phe-74 and Gly-103–Ser-106 each bind ATP. Asp-104 is a binding site for Mg(2+). Thr-127 to Asp-129 is a substrate binding site. Asp-129 acts as the Proton acceptor in catalysis. Arg-156 provides a ligand contact to ADP. Substrate-binding positions include Arg-164 and Met-171–Arg-173. ADP-binding positions include Gly-187–Glu-189, Arg-213, and Lys-215–His-217. Substrate-binding positions include Glu-224, Arg-245, and His-251–Arg-254.

This sequence belongs to the phosphofructokinase type A (PFKA) family. ATP-dependent PFK group I subfamily. Prokaryotic clade 'B1' sub-subfamily. As to quaternary structure, homotetramer. Mg(2+) serves as cofactor.

Its subcellular location is the cytoplasm. It carries out the reaction beta-D-fructose 6-phosphate + ATP = beta-D-fructose 1,6-bisphosphate + ADP + H(+). It functions in the pathway carbohydrate degradation; glycolysis; D-glyceraldehyde 3-phosphate and glycerone phosphate from D-glucose: step 3/4. With respect to regulation, allosterically activated by ADP and other diphosphonucleosides, and allosterically inhibited by phosphoenolpyruvate. Functionally, catalyzes the phosphorylation of D-fructose 6-phosphate to fructose 1,6-bisphosphate by ATP, the first committing step of glycolysis. The sequence is that of ATP-dependent 6-phosphofructokinase from Haemophilus influenzae (strain 86-028NP).